The sequence spans 59 residues: Large ribosomal subunit protein uL30 (59 aa).

This sequence belongs to the universal ribosomal protein uL30 family. Part of the 50S ribosomal subunit.

This Leptospira interrogans serogroup Icterohaemorrhagiae serovar copenhageni (strain Fiocruz L1-130) protein is Large ribosomal subunit protein uL30.